Reading from the N-terminus, the 193-residue chain is ATP-dependent Clp protease proteolytic subunit (193 aa).

Serine 98 (nucleophile) is an active-site residue. Histidine 123 is a catalytic residue.

It belongs to the peptidase S14 family. As to quaternary structure, fourteen ClpP subunits assemble into 2 heptameric rings which stack back to back to give a disk-like structure with a central cavity, resembling the structure of eukaryotic proteasomes.

It localises to the cytoplasm. The enzyme catalyses Hydrolysis of proteins to small peptides in the presence of ATP and magnesium. alpha-casein is the usual test substrate. In the absence of ATP, only oligopeptides shorter than five residues are hydrolyzed (such as succinyl-Leu-Tyr-|-NHMec, and Leu-Tyr-Leu-|-Tyr-Trp, in which cleavage of the -Tyr-|-Leu- and -Tyr-|-Trp bonds also occurs).. Cleaves peptides in various proteins in a process that requires ATP hydrolysis. Has a chymotrypsin-like activity. Plays a major role in the degradation of misfolded proteins. This Glaesserella parasuis serovar 5 (strain SH0165) (Haemophilus parasuis) protein is ATP-dependent Clp protease proteolytic subunit.